The sequence spans 296 residues: Adrenocorticotropic hormone receptor (296 aa).

Topologically, residues 1–23 (MKHIINSYEHTNDTARNNSDCPD) are extracellular. N-linked (GlcNAc...) asparagine glycosylation is found at Asn12 and Asn17. 2 disulfides stabilise this stretch: Cys21/Cys253 and Cys245/Cys251. The helical transmembrane segment at 24 to 49 (VVLPEEIFFTISVIGILENLIVLLAV) threads the bilayer. The Cytoplasmic portion of the chain corresponds to 50–58 (IKNKNLQSP). Residues 59-79 (MYFFICSLAISDMLGSLYKIL) traverse the membrane as a helical segment. At 80 to 104 (ENILIMFRNMGYLKPRGSFESTADD) the chain is on the extracellular side. Residues 105-126 (IIDCMFILSLLGSIFSLSVIAA) traverse the membrane as a helical segment. Residues 127–147 (DRYITIFHALQYHSIVTMRRT) lie on the Cytoplasmic side of the membrane. The helical transmembrane segment at 148–168 (IITLTIIWMFCTGSGITMVIF) threads the bilayer. Over 169 to 180 (SHHIPTVLTFTS) the chain is Extracellular. A helical transmembrane segment spans residues 181–199 (LFPLMLVFILCLYIHMFLL). Residues 200 to 217 (ARSHARKISTLPRTNMKG) are Cytoplasmic-facing. Residues 218–244 (AMTLTILLGVFIFCWAPFVLHVLLMTF) traverse the membrane as a helical segment. Residues 245-256 (CPNNPYCVCYMS) are Extracellular-facing. Residues 257–278 (LFQVNGMLIMCNAVIDPFIYAF) traverse the membrane as a helical segment. Residues 279 to 296 (RSPELRDAFKRMLFCNRY) are Cytoplasmic-facing. Cys293 is lipidated: S-palmitoyl cysteine.

Belongs to the G-protein coupled receptor 1 family. As to quaternary structure, homodimer. Interacts with corticotropin (ACTH). Interacts with MRAP; this interaction targets MC2R to the plasma membrane. Interacts with MRAP2; competing with MRAP for binding to MC2R and impairing the binding of corticotropin (ACTH). Ubiquitinated by MGRN1 that may be involved in post-endocytic trafficking and/or degradation of internalized receptor.

The protein resides in the cell membrane. In terms of biological role, hormone receptor primarily expressed in adrenal cortex that plays a key role in regulating adrenocortical function. Upon corticotropin (ACTH) binding, facilitates the release of adrenal glucocorticoids, including cortisol and corticosterone. In addition, MC2R is required for fetal and neonatal adrenal gland development. Mechanistically, activates adenylate cyclase (cAMP), the MAPK cascade as well as the cAMP-dependent protein kinase A pathway leading to steroidogenic factor 1/NR5A1-mediated transcriptional activation. The polypeptide is Adrenocorticotropic hormone receptor (Mc2r) (Mus musculus (Mouse)).